A 276-amino-acid chain; its full sequence is MVDGHLEASTRGFDVNRPPSSGGGGGAEEEQDDVAGAALSSSPNNSAGSFPMDDFSGHGLGGNDAAPGGGGGDRSCSRASDEDDGGSARKKLRLSKEQSAFLEESFKEHSTLNPKQKLALAKQLNLRPRQVEVWFQNRRARTKLKQTEVDCEYLKRCCETLTEENRRLQKELAELRALKTVHPFYMHLPATTLSMCPSCERVASNSAPATASSAATSSTAAPPAAPSSGGIAATSSSSAAAAAAPDHRPSSFAALFSSPRGFPLSVAPQAQPPTSS.

The interval 1-92 is disordered; that stretch reads MVDGHLEAST…DDGGSARKKL (92 aa). The span at 39–48 shows a compositional bias: polar residues; sequence LSSSPNNSAG. Residues 58-73 show a composition bias toward gly residues; it reads HGLGGNDAAPGGGGGD. Residues 87–146 constitute a DNA-binding region (homeobox); sequence SARKKLRLSKEQSAFLEESFKEHSTLNPKQKLALAKQLNLRPRQVEVWFQNRRARTKLKQ. Positions 145 to 189 are leucine-zipper; sequence KQTEVDCEYLKRCCETLTEENRRLQKELAELRALKTVHPFYMHLP. Residues 214–244 form a disordered region; sequence AATSSTAAPPAAPSSGGIAATSSSSAAAAAA.

It belongs to the HD-ZIP homeobox family. Class II subfamily. In terms of tissue distribution, expressed in stems, leaf sheaths and blades and panicles.

The protein localises to the nucleus. Probable transcription factor. The sequence is that of Homeobox-leucine zipper protein HOX11 (HOX11) from Oryza sativa subsp. indica (Rice).